The following is a 97-amino-acid chain: Large ribosomal subunit protein uL23 (97 aa).

Belongs to the universal ribosomal protein uL23 family. In terms of assembly, part of the 50S ribosomal subunit. Contacts protein L29, and trigger factor when it is bound to the ribosome.

In terms of biological role, one of the early assembly proteins it binds 23S rRNA. One of the proteins that surrounds the polypeptide exit tunnel on the outside of the ribosome. Forms the main docking site for trigger factor binding to the ribosome. The protein is Large ribosomal subunit protein uL23 of Myxococcus xanthus (strain DK1622).